The following is a 160-amino-acid chain: Cytochrome b6-f complex subunit 4 (160 aa).

A run of 3 helical transmembrane segments spans residues 36 to 56 (LLYV…GLAI), 95 to 115 (LLGV…PFIE), and 131 to 151 (TVFL…TMPI).

Belongs to the cytochrome b family. PetD subfamily. In terms of assembly, the 4 large subunits of the cytochrome b6-f complex are cytochrome b6, subunit IV (17 kDa polypeptide, petD), cytochrome f and the Rieske protein, while the 4 small subunits are petG, petL, petM and petN. The complex functions as a dimer.

It is found in the plastid. It localises to the chloroplast thylakoid membrane. Component of the cytochrome b6-f complex, which mediates electron transfer between photosystem II (PSII) and photosystem I (PSI), cyclic electron flow around PSI, and state transitions. In Pyropia yezoensis (Susabi-nori), this protein is Cytochrome b6-f complex subunit 4.